We begin with the raw amino-acid sequence, 172 residues long: Peptidyl-prolyl cis-trans isomerase (172 aa).

Positions 7–170 constitute a PPIase cyclophilin-type domain; sequence FFDMAIAGNP…RPVTIADCGQ (164 aa).

Belongs to the cyclophilin-type PPIase family. In terms of tissue distribution, expressed in meristematic tissues, with higher levels in nodules.

The protein localises to the cytoplasm. It catalyses the reaction [protein]-peptidylproline (omega=180) = [protein]-peptidylproline (omega=0). With respect to regulation, binds cyclosporin A (CsA). CsA mediates some of its effects via an inhibitory action on PPIase. PPIases accelerate the folding of proteins. It catalyzes the cis-trans isomerization of proline imidic peptide bonds in oligopeptides. This Lupinus luteus (European yellow lupine) protein is Peptidyl-prolyl cis-trans isomerase.